Reading from the N-terminus, the 128-residue chain is uncharacterized protein (128 aa).

The next 3 helical transmembrane spans lie at methionine 1–leucine 21, valine 51–glycine 71, and alanine 76–valine 96.

The protein resides in the membrane. This is an uncharacterized protein from Saccharomyces cerevisiae (strain ATCC 204508 / S288c) (Baker's yeast).